The sequence spans 377 residues: Chaperone protein DnaJ (377 aa).

A J domain is found at 5-70 (DYYEVLEVSR…EKRTIYDRYG (66 aa)). The CR-type zinc finger occupies 138–215 (GCEKKIDITY…CQGKGYHEET (78 aa)). 8 residues coordinate Zn(2+): cysteine 151, cysteine 154, cysteine 167, cysteine 170, cysteine 189, cysteine 192, cysteine 203, and cysteine 206. CXXCXGXG motif repeat units follow at residues 151-158 (CEECGGTG), 167-174 (CDYCGGQG), 189-196 (CPKCHGEG), and 203-210 (CPSCQGKG).

This sequence belongs to the DnaJ family. In terms of assembly, homodimer. Zn(2+) serves as cofactor.

It localises to the cytoplasm. Functionally, participates actively in the response to hyperosmotic and heat shock by preventing the aggregation of stress-denatured proteins and by disaggregating proteins, also in an autonomous, DnaK-independent fashion. Unfolded proteins bind initially to DnaJ; upon interaction with the DnaJ-bound protein, DnaK hydrolyzes its bound ATP, resulting in the formation of a stable complex. GrpE releases ADP from DnaK; ATP binding to DnaK triggers the release of the substrate protein, thus completing the reaction cycle. Several rounds of ATP-dependent interactions between DnaJ, DnaK and GrpE are required for fully efficient folding. Also involved, together with DnaK and GrpE, in the DNA replication of plasmids through activation of initiation proteins. The chain is Chaperone protein DnaJ from Sulfurovum sp. (strain NBC37-1).